A 354-amino-acid chain; its full sequence is Histidinol-phosphate aminotransferase 1 (354 aa).

The residue at position 209 (K209) is an N6-(pyridoxal phosphate)lysine.

It belongs to the class-II pyridoxal-phosphate-dependent aminotransferase family. Histidinol-phosphate aminotransferase subfamily. As to quaternary structure, homodimer. Pyridoxal 5'-phosphate serves as cofactor.

The enzyme catalyses L-histidinol phosphate + 2-oxoglutarate = 3-(imidazol-4-yl)-2-oxopropyl phosphate + L-glutamate. The protein operates within amino-acid biosynthesis; L-histidine biosynthesis; L-histidine from 5-phospho-alpha-D-ribose 1-diphosphate: step 7/9. This chain is Histidinol-phosphate aminotransferase 1 (hisC1), found in Oceanobacillus iheyensis (strain DSM 14371 / CIP 107618 / JCM 11309 / KCTC 3954 / HTE831).